A 179-amino-acid chain; its full sequence is Inner membrane-spanning protein YciB (179 aa).

5 helical membrane passes run 11 to 31 (ILFFAVYKLQGIQAAAITLII), 52 to 69 (LIMGSAVVFFGSLSAYFN), 71 to 91 (LEFLKWKVTVVYALFSLILLV), 121 to 141 (LGWAVFFLLCMLINLYISQYL), and 149 to 169 (FKTFGILGMTLIATLVTGVYI).

The protein belongs to the YciB family.

The protein resides in the cell inner membrane. Plays a role in cell envelope biogenesis, maintenance of cell envelope integrity and membrane homeostasis. This chain is Inner membrane-spanning protein YciB, found in Histophilus somni (strain 129Pt) (Haemophilus somnus).